The following is a 122-amino-acid chain: MGDNDRTAIRRKALRRGLVSEYVAAVFLMLKGYRILALRHRTRLGEIDIVARKGDLAVFVEVKARHGEAAAVDAVSAAAQKRIRAASDLWLARQADQARLSQRYDIVAVTPSRLPRHFPDAF.

Belongs to the UPF0102 family.

The polypeptide is UPF0102 protein RHECIAT_CH0000358 (Rhizobium etli (strain CIAT 652)).